Here is a 384-residue protein sequence, read N- to C-terminus: Putative 8-amino-7-oxononanoate synthase (384 aa).

Position 22 (R22) interacts with substrate. 109–110 (GY) is a pyridoxal 5'-phosphate binding site. Residue H134 participates in substrate binding. Pyridoxal 5'-phosphate contacts are provided by residues S182, 207 to 210 (DDAH), and 236 to 239 (TLSK). Residue K239 is modified to N6-(pyridoxal phosphate)lysine. Residue T348 participates in substrate binding.

Belongs to the class-II pyridoxal-phosphate-dependent aminotransferase family. BioF subfamily. Homodimer. Pyridoxal 5'-phosphate is required as a cofactor.

The catalysed reaction is 6-carboxyhexanoyl-[ACP] + L-alanine + H(+) = (8S)-8-amino-7-oxononanoate + holo-[ACP] + CO2. It participates in cofactor biosynthesis; biotin biosynthesis. Its function is as follows. Catalyzes the decarboxylative condensation of pimeloyl-[acyl-carrier protein] and L-alanine to produce 8-amino-7-oxononanoate (AON), [acyl-carrier protein], and carbon dioxide. This is Putative 8-amino-7-oxononanoate synthase (bioF) from Caulobacter vibrioides (strain ATCC 19089 / CIP 103742 / CB 15) (Caulobacter crescentus).